Reading from the N-terminus, the 251-residue chain is Zinc import ATP-binding protein ZnuC (251 aa).

Residues 5 to 220 form the ABC transporter domain; the sequence is VSLENVSVSF…PEFISMFGPR (216 aa). 37–44 is a binding site for ATP; the sequence is GPNGAGKS.

The protein belongs to the ABC transporter superfamily. Zinc importer (TC 3.A.1.15.5) family. The complex is composed of two ATP-binding proteins (ZnuC), two transmembrane proteins (ZnuB) and a solute-binding protein (ZnuA).

Its subcellular location is the cell inner membrane. The enzyme catalyses Zn(2+)(out) + ATP(in) + H2O(in) = Zn(2+)(in) + ADP(in) + phosphate(in) + H(+)(in). In terms of biological role, part of the ABC transporter complex ZnuABC involved in zinc import. Responsible for energy coupling to the transport system. This chain is Zinc import ATP-binding protein ZnuC, found in Escherichia coli O157:H7.